The following is a 103-amino-acid chain: UPF0473 protein SSA_2239 (103 aa).

Belongs to the UPF0473 family.

This is UPF0473 protein SSA_2239 from Streptococcus sanguinis (strain SK36).